A 415-amino-acid chain; its full sequence is NAD-dependent protein deacetylase hst4 (415 aa).

The segment at 1 to 26 (MKVEEHVPLIQESRKRKCQSSENASK) is disordered. Positions 40–337 (TGNENVDLSP…RRLKPLLDAP (298 aa)) constitute a Deacetylase sirtuin-type domain. NAD(+) is bound by residues 65 to 84 (GAGI…EGLF) and 153 to 156 (QNID). H184 functions as the Proton acceptor in the catalytic mechanism. Positions 192, 195, 214, and 217 each coordinate Zn(2+). NAD(+)-binding positions include 273–275 (GTS), 303–305 (NYD), and L323.

This sequence belongs to the sirtuin family. Class I subfamily. Zn(2+) serves as cofactor.

It localises to the nucleus. Its subcellular location is the nucleolus. It catalyses the reaction N(6)-acetyl-L-lysyl-[protein] + NAD(+) + H2O = 2''-O-acetyl-ADP-D-ribose + nicotinamide + L-lysyl-[protein]. Functionally, NAD-dependent histone deacetylase, which contributes to both telomeric and centromeric silencing, proper cell cycle progression, DNA damage control, recombination, and genomic maintenance. This chain is NAD-dependent protein deacetylase hst4 (hst4), found in Schizosaccharomyces pombe (strain 972 / ATCC 24843) (Fission yeast).